The primary structure comprises 167 residues: MATSELSCQVSEENQERREAFWAEWKDLTLSTRPEEGCSLHEEDTQRHETYHRQGQCQAVVQRSPWLVMRLGILGRGLQEYQLPYQRVLPLPIFTPTKVGASKEEREETPIQLRELLALETALGGQCVERQDVAEITKQLPPVVPVSKPGPLRRTLSRSMSQEAQRG.

The residue at position 39 (S39) is a Phosphoserine. Residues 142-167 form a disordered region; the sequence is PVVPVSKPGPLRRTLSRSMSQEAQRG. Polar residues predominate over residues 157 to 167; the sequence is SRSMSQEAQRG.

As to quaternary structure, interacts with MYOZ1, MYOZ2 and MYOZ3. Interacts with CSRP3. Interacts directly with the N-terminal Ig-like domains of 2 titin (TTN) molecules. Interacts with ANKRD2; the interaction is direct.

It is found in the cytoplasm. It localises to the myofibril. The protein localises to the sarcomere. Its function is as follows. Muscle assembly regulating factor. Mediates the antiparallel assembly of titin (TTN) molecules at the sarcomeric Z-disk. The polypeptide is Telethonin (Tcap) (Mus musculus (Mouse)).